We begin with the raw amino-acid sequence, 126 residues long: Large ribosomal subunit protein bL20 (126 aa).

This sequence belongs to the bacterial ribosomal protein bL20 family.

Functionally, binds directly to 23S ribosomal RNA and is necessary for the in vitro assembly process of the 50S ribosomal subunit. It is not involved in the protein synthesizing functions of that subunit. This chain is Large ribosomal subunit protein bL20, found in Nocardia farcinica (strain IFM 10152).